An 86-amino-acid polypeptide reads, in one-letter code: Kappa-theraphotoxin-Cg1a 4 (86 aa).

The signal sequence occupies residues 1–21 (MKASVLITLAVLGVMFVWASA). Positions 22-50 (AELEERGSDQRDSPAWLKSMERIFQSEER) are excised as a propeptide. Intrachain disulfides connect Cys52–Cys66, Cys59–Cys71, and Cys65–Cys78. Phe84 is modified (phenylalanine amide).

The protein belongs to the neurotoxin 10 (Hwtx-1) family. 28 (Jztx-11) subfamily. Expressed by the venom gland.

It localises to the secreted. This toxin acts as a voltage-dependent gating-modifier. It inhibits the sodium conductance (IC(50)=124 nM) and slows the fast inactivation (EC(50)=1180 nM) of Nav1.5/SCN5A. It significantly shifts the activation to more depolarized voltages and decreases the deactivation of Nav1.5 currents upon extreme depolarization, but only slightly affects voltage-dependence of steady-state inactivation. In addition, this toxin causes an approximately five-fold decrease in the rate of recovery from inactivation and an approximately 1.9-fold reduction in the closed-state inactivation rate. This toxin integrates the functions of site 3 toxins (alpha-scorpion toxins) with site 4 toxins (beta-scorpion and spider toxins) by targeting multiple sites on Nav1.5. Also shows inhibition of voltage-gated potassium channels (5 uM completely inhibits Kv2.1/KCNB1, whereas 5 uM moderately inhibits Kv4.2/KCND2 Kv4.1/KCND1 channels). The polypeptide is Kappa-theraphotoxin-Cg1a 4 (Chilobrachys guangxiensis (Chinese earth tiger tarantula)).